A 150-amino-acid polypeptide reads, in one-letter code: Small ribosomal subunit protein bS6 (150 aa).

Residues 99 to 150 are disordered; it reads GPSAMLQKRDRDDRGERGERGFGGGGFGGGRDREDRPRRGRDREEAATEETF. 2 stretches are compositionally biased toward basic and acidic residues: residues 105-118 and 128-144; these read QKRD…RGER and GRDR…REEA.

The protein belongs to the bacterial ribosomal protein bS6 family.

In terms of biological role, binds together with bS18 to 16S ribosomal RNA. The sequence is that of Small ribosomal subunit protein bS6 from Azorhizobium caulinodans (strain ATCC 43989 / DSM 5975 / JCM 20966 / LMG 6465 / NBRC 14845 / NCIMB 13405 / ORS 571).